Here is a 387-residue protein sequence, read N- to C-terminus: Succinyl-diaminopimelate desuccinylase (387 aa).

H73 serves as a coordination point for Zn(2+). D75 is a catalytic residue. D106 contributes to the Zn(2+) binding site. E141 functions as the Proton acceptor in the catalytic mechanism. The Zn(2+) site is built by E142, E170, and H359.

It belongs to the peptidase M20A family. DapE subfamily. In terms of assembly, homodimer. Zn(2+) is required as a cofactor. Requires Co(2+) as cofactor.

It carries out the reaction N-succinyl-(2S,6S)-2,6-diaminopimelate + H2O = (2S,6S)-2,6-diaminopimelate + succinate. It participates in amino-acid biosynthesis; L-lysine biosynthesis via DAP pathway; LL-2,6-diaminopimelate from (S)-tetrahydrodipicolinate (succinylase route): step 3/3. In terms of biological role, catalyzes the hydrolysis of N-succinyl-L,L-diaminopimelic acid (SDAP), forming succinate and LL-2,6-diaminopimelate (DAP), an intermediate involved in the bacterial biosynthesis of lysine and meso-diaminopimelic acid, an essential component of bacterial cell walls. The chain is Succinyl-diaminopimelate desuccinylase from Methylorubrum populi (strain ATCC BAA-705 / NCIMB 13946 / BJ001) (Methylobacterium populi).